The following is a 633-amino-acid chain: Extracellular metalloproteinase 3 (633 aa).

An N-terminal signal peptide occupies residues Met1–Ala18. A propeptide spanning residues His19–Ser246 is cleaved from the precursor. Asn410 carries an N-linked (GlcNAc...) asparagine glycan. His429 serves as a coordination point for Zn(2+). Glu430 is a catalytic residue. His433 is a Zn(2+) binding site. Asn480 and Asn622 each carry an N-linked (GlcNAc...) asparagine glycan.

The protein belongs to the peptidase M36 family. The cofactor is Zn(2+).

It is found in the secreted. Secreted metalloproteinase probably acting as a virulence factor. The chain is Extracellular metalloproteinase 3 (MEP3) from Arthroderma benhamiae (Trichophyton mentagrophytes).